Consider the following 122-residue polypeptide: UPF0145 protein TV0671 (122 aa).

This sequence belongs to the UPF0145 family.

In Thermoplasma volcanium (strain ATCC 51530 / DSM 4299 / JCM 9571 / NBRC 15438 / GSS1), this protein is UPF0145 protein TV0671.